A 66-amino-acid chain; its full sequence is Small ribosomal subunit protein bS21 (66 aa).

It belongs to the bacterial ribosomal protein bS21 family.

This is Small ribosomal subunit protein bS21 from Persephonella marina (strain DSM 14350 / EX-H1).